The sequence spans 183 residues: MKLLCLVAVVGCLLVPPAQANKSSEDIRCKCICPPYRNISGHIYNQNVSQKDCNCLHVVEPMPVPGHDVEAYCLLCECRYEERSTTTIKVIIVIYLSVVGALLLYMAFLMLVDPLIRKPDAYTEQLHNEEENEDARTMATAAASIGGPRANTVLERVEGAQQRWKLQVQEQRKTVFDRHKMLS.

The signal sequence occupies residues 1-20 (MKLLCLVAVVGCLLVPPAQA). N21, N38, and N47 each carry an N-linked (GlcNAc...) asparagine glycan. Over 21-89 (NKSSEDIRCK…YEERSTTTIK (69 aa)) the chain is Extracellular. Residues 90–110 (VIIVIYLSVVGALLLYMAFLM) traverse the membrane as a helical segment. At 111–183 (LVDPLIRKPD…TVFDRHKMLS (73 aa)) the chain is on the cytoplasmic side. S144 is subject to Phosphoserine.

It belongs to the TMEM9 family. Interacts with the v-ATPase accessory protein ATP6AP2 and with the v-ATPase complex subunit ATP6V0D1; these interactions lead to the assembly of the v-ATPase complex. In terms of processing, N-glycosylated. As to expression, expressed in heart, lung, kidney, liver and intestines. Enriched in the hepatocytes around the central vein.

It localises to the lysosome membrane. The protein resides in the late endosome membrane. Its subcellular location is the endosome. It is found in the multivesicular body membrane. Functionally, transmembrane protein that binds to and facilitates the assembly of lysosomal proton-transporting V-type ATPase (v-ATPase), resulting in enhanced lysosomal acidification and trafficking. By bringing the v-ATPase accessory protein ATP6AP2 and the v-ATPase subunit ATP6V0D1 together, allows v-ATPase complex formation and activation. TMEM9-controlled vesicular acidification induces hyperactivation of Wnt/beta-catenin signaling, involved in development, tissue homeostasis and tissue regeneration, through lysosomal degradation of adenomatous polyposis coli/APC. In the liver, involved in hepatic regeneration. The polypeptide is Proton-transporting V-type ATPase complex assembly regulator TMEM9 (Mus musculus (Mouse)).